Reading from the N-terminus, the 620-residue chain is MADALVGYEKEAGCVPILHPEEIKPQSHYNHGYNESRKSHVDDYSTWDIVKATQYGIFERCRELVEAGYDVRQPDKENVTLLHWAAINNRVDLVKYYISKGAIVDQLGGDLNSTPLHWATRQGHLSMVVQLMKYGADPSLIDGEGCSCVHLAAQFGHTSIVAYLIAKGQDVDMMDQNGMTPLMWAAYRTHSVDPTRLLLTFNVSVNLGDKYHKNTALHWAVLAGNTTVISLLLEANANVDAQNIKGETPLDLAKQRKNVWMINHLQEARQAKGYDSPSYLKRLKMDKEFRQKVMLGTPFLVIWLVGFIADLDIDSWLIKGVMYAVMWLVVQFLSKSFFDHSMHSALPLGIYLATKFWMYITWFYWFWNDLPFVTIHLPFLLNSLALFYNFGKSWKSDPGIIKASEEQKKKTIVELAETGSLDLSIFCSTCLIRKPIRSKHCAVCNRCIAKFDHHCPWVGNCVGSGNHRYFMGYLFFLLCMICWMMYGCICYWRIHCATSYTKDGFWIYITQIATCSPWMFWMFLNSVFHFMWVAVLIMCQLYQIAVLGITTNERMNARRYKHFKVTATSIESPFNHGCMRNLIDFFELRCCGLLRPVPIDWTSQYTIEYDQTSGSGYQLV.

Topologically, residues 1 to 292 (MADALVGYEK…LKMDKEFRQK (292 aa)) are cytoplasmic. ANK repeat units follow at residues 77–106 (ENVTLLHWAAINNRVDLVKYYISKGAIVDQ), 111–140 (LNSTPLHWATRQGHLSMVVQLMKYGADPSL), 144–173 (EGCSCVHLAAQFGHTSIVAYLIAKGQDVDM), 177–207 (NGMTPLMWAAYRTHSVDPTRLLLTFNVSVNL), 212–241 (HKNTALHWAVLAGNTTVISLLLEANANVDA), and 245–274 (KGETPLDLAKQRKNVWMINHLQEARQAKGY). 2 helical membrane passes run 293–313 (VMLGTPFLVIWLVGFIADLDI) and 314–334 (DSWLIKGVMYAVMWLVVQFLS). The Cytoplasmic segment spans residues 335-345 (KSFFDHSMHSA). The helical transmembrane segment at 346-366 (LPLGIYLATKFWMYITWFYWF) threads the bilayer. The Lumenal segment spans residues 367-369 (WND). The helical transmembrane segment at 370 to 390 (LPFVTIHLPFLLNSLALFYNF) threads the bilayer. Topologically, residues 391–469 (GKSWKSDPGI…NCVGSGNHRY (79 aa)) are cytoplasmic. A DHHC domain is found at 425–475 (IFCSTCLIRKPIRSKHCAVCNRCIAKFDHHCPWVGNCVGSGNHRYFMGYLF). C455 functions as the S-palmitoyl cysteine intermediate in the catalytic mechanism. Residues 470–490 (FMGYLFFLLCMICWMMYGCIC) form a helical membrane-spanning segment. The Lumenal segment spans residues 491–504 (YWRIHCATSYTKDG). The helical transmembrane segment at 505–524 (FWIYITQIATCSPWMFWMFL) threads the bilayer. Residues 525–620 (NSVFHFMWVA…QTSGSGYQLV (96 aa)) lie on the Cytoplasmic side of the membrane.

Belongs to the DHHC palmitoyltransferase family. AKR/ZDHHC17 subfamily. Post-translationally, autopalmitoylated.

Its subcellular location is the golgi apparatus membrane. The protein localises to the cytoplasmic vesicle membrane. It is found in the presynaptic cell membrane. It carries out the reaction L-cysteinyl-[protein] + hexadecanoyl-CoA = S-hexadecanoyl-L-cysteinyl-[protein] + CoA. The enzyme catalyses L-cysteinyl-[protein] + tetradecanoyl-CoA = S-tetradecanoyl-L-cysteinyl-[protein] + CoA. The catalysed reaction is L-cysteinyl-[protein] + octadecanoyl-CoA = S-octadecanoyl-L-cysteinyl-[protein] + CoA. Its function is as follows. Palmitoyltransferase that catalyzes the addition of palmitate onto various protein substrates and is involved in a variety of cellular processes. Has no stringent fatty acid selectivity and in addition to palmitate can also transfer onto target proteins myristate from tetradecanoyl-CoA and stearate from octadecanoyl-CoA. Plays a role in axonogenesis. The polypeptide is Palmitoyltransferase ZDHHC17 (Danio rerio (Zebrafish)).